A 79-amino-acid chain; its full sequence is Pulmonary surfactant-associated protein B (79 aa).

The 76-residue stretch at 4–79 (PLPFCWLCRT…VCGLVLRCSS (76 aa)) folds into the Saposin B-type domain. 3 cysteine pairs are disulfide-bonded: cysteine 8-cysteine 77, cysteine 11-cysteine 71, and cysteine 35-cysteine 46.

Homodimer; disulfide-linked.

It localises to the secreted. Its subcellular location is the extracellular space. It is found in the surface film. Functionally, pulmonary surfactant-associated proteins promote alveolar stability by lowering the surface tension at the air-liquid interface in the peripheral air spaces. SP-B increases the collapse pressure of palmitic acid to nearly 70 millinewtons per meter. In Sus scrofa (Pig), this protein is Pulmonary surfactant-associated protein B (SFTPB).